A 325-amino-acid polypeptide reads, in one-letter code: Phospholipid phosphatase-related protein type 1 (325 aa).

The N-linked (GlcNAc...) asparagine glycan is linked to Asn-5. 3 helical membrane passes run 13 to 33, 67 to 87, and 127 to 147; these read IIPCFIFVELVIMAGTVLLAY, FISPLVLYCVLAATPTAIIFI, and FIGVFAFGLFATDIFVNAGQV. Asn-163 is a glycosylation site (N-linked (GlcNAc...) asparagine). 3 helical membrane-spanning segments follow: residues 201–219, 226–244, and 257–277; these read AALSIYSALYATMYITSTI, LAKPVLCLGDLCTAFLTGL, and VIAGFILGTAVALFLGMCVVH. Ser-307 is subject to Phosphoserine. An N-linked (GlcNAc...) asparagine glycan is attached at Asn-316.

It belongs to the PA-phosphatase related phosphoesterase family. As to expression, highly expressed in the brain. Also found in the liver, kidney and testis. In the brain shows a strongest expression in the hippocampus and cerebellum.

The protein localises to the cell membrane. It localises to the cell projection. It is found in the neuron projection. Its function is as follows. May play a role in neurite outgrowth and neurogenesis. The chain is Phospholipid phosphatase-related protein type 1 from Rattus norvegicus (Rat).